The chain runs to 173 residues: Crossover junction endodeoxyribonuclease RuvC (173 aa).

Catalysis depends on residues Asp8, Glu67, and Asp139. Mg(2+) contacts are provided by Asp8, Glu67, and Asp139.

It belongs to the RuvC family. Homodimer which binds Holliday junction (HJ) DNA. The HJ becomes 2-fold symmetrical on binding to RuvC with unstacked arms; it has a different conformation from HJ DNA in complex with RuvA. In the full resolvosome a probable DNA-RuvA(4)-RuvB(12)-RuvC(2) complex forms which resolves the HJ. Requires Mg(2+) as cofactor.

Its subcellular location is the cytoplasm. The enzyme catalyses Endonucleolytic cleavage at a junction such as a reciprocal single-stranded crossover between two homologous DNA duplexes (Holliday junction).. The RuvA-RuvB-RuvC complex processes Holliday junction (HJ) DNA during genetic recombination and DNA repair. Endonuclease that resolves HJ intermediates. Cleaves cruciform DNA by making single-stranded nicks across the HJ at symmetrical positions within the homologous arms, yielding a 5'-phosphate and a 3'-hydroxyl group; requires a central core of homology in the junction. The consensus cleavage sequence is 5'-(A/T)TT(C/G)-3'. Cleavage occurs on the 3'-side of the TT dinucleotide at the point of strand exchange. HJ branch migration catalyzed by RuvA-RuvB allows RuvC to scan DNA until it finds its consensus sequence, where it cleaves and resolves the cruciform DNA. In Vibrio vulnificus (strain CMCP6), this protein is Crossover junction endodeoxyribonuclease RuvC.